The sequence spans 344 residues: Heptahelical transmembrane protein 3 (344 aa).

Topologically, residues 1–76 (MKRRRSAKKS…AFSWHNETLN (76 aa)) are cytoplasmic. The chain crosses the membrane as a helical span at residues 77-97 (IWTHLIGFGIFLWMTVVSCLE). The Extracellular portion of the chain corresponds to 98 to 147 (TTEISLAGVFNGMAGVRICLSSNQTLLHDSNVTHHISCLTSQGEAIPKWP). Residues 148-168 (WLVYLVGAMGCLICSSVSHLL) form a helical membrane-spanning segment. The Cytoplasmic portion of the chain corresponds to 169-184 (ACHSKRFNVFFWRLDY). The helical transmembrane segment at 185-205 (AGISLMIVASFFAPIYYAFSC) threads the bilayer. The Extracellular portion of the chain corresponds to 206 to 210 (HPNFR). Residues 211–231 (LLYLSSISILGLLAIITLLSP) traverse the membrane as a helical segment. The Cytoplasmic segment spans residues 232-244 (ALSTPRFRPFRAN). The helical transmembrane segment at 245-265 (LFLAMGSSAVIPATHVLCLYW) threads the bilayer. Topologically, residues 266–269 (DHPN) are extracellular. A helical membrane pass occupies residues 270–290 (VFIALGYEIATALSYFVGATF). At 291–312 (YVSRVPERWKPGAFDMAGHSHQ) the chain is on the cytoplasmic side. Residues 313 to 333 (IFHVFVVMGALAHCVTTLLII) form a helical membrane-spanning segment. The Extracellular segment spans residues 334–344 (DFSRASPSCGF).

Belongs to the ADIPOR family. In terms of tissue distribution, expressed in roots and flowers.

The protein localises to the membrane. Functionally, may play a role in abiotic stress response. The protein is Heptahelical transmembrane protein 3 (HHP3) of Arabidopsis thaliana (Mouse-ear cress).